The chain runs to 119 residues: MAARIAGVNIPVQKHARIALQAIYGIGNSRALEICKEAKIDPATKVKDLSEAELDALRTEVGKFSVEGDLRRERSMDIKRKMDLGTYEGIRHRRGLPLRGQRTRSNARTRKGKRKPIRS.

The tract at residues 90–119 (IRHRRGLPLRGQRTRSNARTRKGKRKPIRS) is disordered. A compositionally biased stretch (basic residues) spans 91–119 (RHRRGLPLRGQRTRSNARTRKGKRKPIRS).

It belongs to the universal ribosomal protein uS13 family. Part of the 30S ribosomal subunit. Forms a loose heterodimer with protein S19. Forms two bridges to the 50S subunit in the 70S ribosome.

In terms of biological role, located at the top of the head of the 30S subunit, it contacts several helices of the 16S rRNA. In the 70S ribosome it contacts the 23S rRNA (bridge B1a) and protein L5 of the 50S subunit (bridge B1b), connecting the 2 subunits; these bridges are implicated in subunit movement. Contacts the tRNAs in the A and P-sites. The sequence is that of Small ribosomal subunit protein uS13 from Coxiella burnetii (strain CbuK_Q154) (Coxiella burnetii (strain Q154)).